Consider the following 370-residue polypeptide: Putative L-lysine 2,3-aminomutase aq_454 (370 aa).

The 216-residue stretch at 107-322 (HRYPDRVLLN…RGRLSGFGIP (216 aa)) folds into the Radical SAM core domain. Residues C121, C125, and C128 each coordinate [4Fe-4S] cluster. N6-(pyridoxal phosphate)lysine is present on K334.

Belongs to the radical SAM superfamily. KamA family. [4Fe-4S] cluster serves as cofactor. Pyridoxal 5'-phosphate is required as a cofactor.

The chain is Putative L-lysine 2,3-aminomutase aq_454 from Aquifex aeolicus (strain VF5).